Consider the following 219-residue polypeptide: Eukaryotic translation initiation factor 3 subunit K (219 aa).

A PCI domain is found at 43-205; sequence YDLEANLAVL…SVKPKNIVEK (163 aa).

This sequence belongs to the eIF-3 subunit K family. Component of the eukaryotic translation initiation factor 3 (eIF-3) complex, which is composed of 13 subunits: eif3a, eif3b, eif3c, eif3d, eif3e, eif3f, eif3g, eif3h, eif3i, eif3j, eif3k, eif3l and eif3m.

It localises to the nucleus. The protein resides in the cytoplasm. Its function is as follows. Component of the eukaryotic translation initiation factor 3 (eIF-3) complex, which is involved in protein synthesis of a specialized repertoire of mRNAs and, together with other initiation factors, stimulates binding of mRNA and methionyl-tRNAi to the 40S ribosome. The eIF-3 complex specifically targets and initiates translation of a subset of mRNAs involved in cell proliferation. In Danio rerio (Zebrafish), this protein is Eukaryotic translation initiation factor 3 subunit K (eif3k).